The sequence spans 209 residues: Large ribosomal subunit protein uL3 (209 aa).

Residues 127 to 166 (NFGGGSRTHGQSDRLRAPGSVGGSSDPSRTFKGTRMAGRM) are disordered.

This sequence belongs to the universal ribosomal protein uL3 family. Part of the 50S ribosomal subunit. Forms a cluster with proteins L14 and L19.

Its function is as follows. One of the primary rRNA binding proteins, it binds directly near the 3'-end of the 23S rRNA, where it nucleates assembly of the 50S subunit. This Chlorobaculum tepidum (strain ATCC 49652 / DSM 12025 / NBRC 103806 / TLS) (Chlorobium tepidum) protein is Large ribosomal subunit protein uL3.